The following is a 311-amino-acid chain: Lipoyl synthase (311 aa).

[4Fe-4S] cluster contacts are provided by Cys47, Cys52, Cys58, Cys73, Cys77, Cys80, and Ser286. A Radical SAM core domain is found at 59 to 276 (WSRHTATYLA…RSVGESLGLF (218 aa)).

It belongs to the radical SAM superfamily. Lipoyl synthase family. It depends on [4Fe-4S] cluster as a cofactor.

The protein resides in the cytoplasm. It catalyses the reaction [[Fe-S] cluster scaffold protein carrying a second [4Fe-4S](2+) cluster] + N(6)-octanoyl-L-lysyl-[protein] + 2 oxidized [2Fe-2S]-[ferredoxin] + 2 S-adenosyl-L-methionine + 4 H(+) = [[Fe-S] cluster scaffold protein] + N(6)-[(R)-dihydrolipoyl]-L-lysyl-[protein] + 4 Fe(3+) + 2 hydrogen sulfide + 2 5'-deoxyadenosine + 2 L-methionine + 2 reduced [2Fe-2S]-[ferredoxin]. It functions in the pathway protein modification; protein lipoylation via endogenous pathway; protein N(6)-(lipoyl)lysine from octanoyl-[acyl-carrier-protein]: step 2/2. In terms of biological role, catalyzes the radical-mediated insertion of two sulfur atoms into the C-6 and C-8 positions of the octanoyl moiety bound to the lipoyl domains of lipoate-dependent enzymes, thereby converting the octanoylated domains into lipoylated derivatives. In Chlamydia trachomatis serovar D (strain ATCC VR-885 / DSM 19411 / UW-3/Cx), this protein is Lipoyl synthase.